Here is a 535-residue protein sequence, read N- to C-terminus: Alcohol O-acetyltransferase 2 (535 aa).

The membrane association stretch occupies residues 19–36 (GHARRMGHLENYFAVLSR). Catalysis depends on charge relay system residues H189 and D193. Residues 515 to 532 (RGEWESFCKLFYQTIGEF) form a membrane association region.

Belongs to the ATF1 alcohol acetyltransferase family.

The protein resides in the lipid droplet. The protein localises to the endoplasmic reticulum membrane. It catalyses the reaction an aliphatic alcohol + acetyl-CoA = an acetyl ester + CoA. Its function is as follows. Can use acetyl-CoA to synthesize acetate esters from various alcohols, producing ethyl acetate, isoamyl acetate, isobutyl acetate, butyl acetate, hexyl acetate, heptyl acetate and octyl acetate. ATF2 seems to play only a minor role in the acetate ester synthesis, compared to ATF1. Plays an active role in the detoxification hydroxysteroids and possibly certain phytochemicals, in association with the efflux pumps PDR5 and SNQ2. This chain is Alcohol O-acetyltransferase 2, found in Saccharomyces cerevisiae (strain ATCC 204508 / S288c) (Baker's yeast).